The following is a 60-amino-acid chain: Large ribosomal subunit protein uL30 (60 aa).

Belongs to the universal ribosomal protein uL30 family. As to quaternary structure, part of the 50S ribosomal subunit.

The protein is Large ribosomal subunit protein uL30 of Azoarcus sp. (strain BH72).